The following is a 343-amino-acid chain: Anthranilate phosphoribosyltransferase (343 aa).

Residues Gly79, 82 to 83, Thr87, 89 to 92, 106 to 114, and Ser118 contribute to the 5-phospho-alpha-D-ribose 1-diphosphate site; these read GD, NVST, and KHGNRAASS. Gly79 lines the anthranilate pocket. Ser91 contacts Mg(2+). Position 109 (Asn109) interacts with anthranilate. Residue Arg164 coordinates anthranilate. Mg(2+) is bound by residues Asp223 and Glu224.

It belongs to the anthranilate phosphoribosyltransferase family. As to quaternary structure, homodimer. The cofactor is Mg(2+).

The enzyme catalyses N-(5-phospho-beta-D-ribosyl)anthranilate + diphosphate = 5-phospho-alpha-D-ribose 1-diphosphate + anthranilate. The protein operates within amino-acid biosynthesis; L-tryptophan biosynthesis; L-tryptophan from chorismate: step 2/5. Its function is as follows. Catalyzes the transfer of the phosphoribosyl group of 5-phosphorylribose-1-pyrophosphate (PRPP) to anthranilate to yield N-(5'-phosphoribosyl)-anthranilate (PRA). The polypeptide is Anthranilate phosphoribosyltransferase (Metallosphaera sedula (strain ATCC 51363 / DSM 5348 / JCM 9185 / NBRC 15509 / TH2)).